Reading from the N-terminus, the 449-residue chain is CCAAT/enhancer-binding protein (449 aa).

3 disordered regions span residues 211 to 233 (HATYNNSSDENSSVGSDSSTIKE), 276 to 302 (GNPLNGGNTTPSSNGSNGSTGSSNGSQ), and 334 to 386 (SKLH…KAKV). Low complexity-rich tracts occupy residues 215–229 (NNSSDENSSVGSDSS), 280–301 (NGGNTTPSSNGSNGSTGSSNGS), and 339–349 (QQQHQQHQQQQ). Over residues 357-368 (KHVDKGTDEYRR) the composition is skewed to basic and acidic residues. One can recognise a bZIP domain in the interval 363-426 (TDEYRRRRER…QLHKQIYMQL (64 aa)). Residues 367–396 (RRRRERNNIAVRKSREKAKVRSREVEERVK) are basic motif. The segment at 398-405 (LLKEKDAL) is leucine-zipper.

This sequence belongs to the bZIP family. C/EBP subfamily. In terms of assembly, binds DNA as a dimer and can form stable heterodimers. Interacts with trbl. Post-translationally, ubiquitination/deubiquitination regulates border cell migration. Ubiquitination is stimulated by trbl, which leads to proteasomal degradation and inhibits border cell migration. Deubiquitination by Usp47, leads to its stabilization and promotes border cell migration.

The protein localises to the nucleus. Required for the expression of gene products mediating border cell migration. Among the DNA sequences that this protein binds with high affinity is a conserved site within the promoter of its gene. The sequence is that of CCAAT/enhancer-binding protein (slbo) from Drosophila melanogaster (Fruit fly).